We begin with the raw amino-acid sequence, 584 residues long: Isocitrate dehydrogenase kinase/phosphatase (584 aa).

Residues 315 to 321 (APGVKGM) and lysine 336 contribute to the ATP site. Residue aspartate 371 is part of the active site.

It belongs to the AceK family.

It localises to the cytoplasm. It carries out the reaction L-seryl-[isocitrate dehydrogenase] + ATP = O-phospho-L-seryl-[isocitrate dehydrogenase] + ADP + H(+). Functionally, bifunctional enzyme which can phosphorylate or dephosphorylate isocitrate dehydrogenase (IDH) on a specific serine residue. This is a regulatory mechanism which enables bacteria to bypass the Krebs cycle via the glyoxylate shunt in response to the source of carbon. When bacteria are grown on glucose, IDH is fully active and unphosphorylated, but when grown on acetate or ethanol, the activity of IDH declines drastically concomitant with its phosphorylation. This Serratia proteamaculans (strain 568) protein is Isocitrate dehydrogenase kinase/phosphatase.